Reading from the N-terminus, the 442-residue chain is UDP-N-acetylmuramate--L-alanine ligase (442 aa).

109–115 is a binding site for ATP; that stretch reads GAHGKTS.

This sequence belongs to the MurCDEF family.

Its subcellular location is the cytoplasm. It catalyses the reaction UDP-N-acetyl-alpha-D-muramate + L-alanine + ATP = UDP-N-acetyl-alpha-D-muramoyl-L-alanine + ADP + phosphate + H(+). Its pathway is cell wall biogenesis; peptidoglycan biosynthesis. Cell wall formation. The protein is UDP-N-acetylmuramate--L-alanine ligase of Streptococcus pyogenes serotype M2 (strain MGAS10270).